Here is a 679-residue protein sequence, read N- to C-terminus: UvrABC system protein C (679 aa).

In terms of domain architecture, GIY-YIG spans 65–143; sequence NSPGVYRMLN…IKRLRPRFNV (79 aa). Residues 253 to 288 enclose the UVR domain; that stretch reads QKVKSHMAEAMNQAAEDLDFERAAIYRDRLAALSHV.

This sequence belongs to the UvrC family. As to quaternary structure, interacts with UvrB in an incision complex.

It localises to the cytoplasm. Its function is as follows. The UvrABC repair system catalyzes the recognition and processing of DNA lesions. UvrC both incises the 5' and 3' sides of the lesion. The N-terminal half is responsible for the 3' incision and the C-terminal half is responsible for the 5' incision. The protein is UvrABC system protein C of Rhizobium etli (strain ATCC 51251 / DSM 11541 / JCM 21823 / NBRC 15573 / CFN 42).